A 478-amino-acid polypeptide reads, in one-letter code: BTB/POZ domain-containing protein 17 (478 aa).

An N-terminal signal peptide occupies residues 1–28 (MPRRGYSKPGSWGSFWAMLTLVGLVTHA). N-linked (GlcNAc...) asparagine glycans are attached at residues Asn61, Asn100, and Asn195. Positions 63 to 132 (SDVVLRVQAA…LYCGELTVLL (70 aa)) constitute a BTB domain. Residues 169 to 269 (AVGWYHYAVG…IPPAQLFQLQ (101 aa)) enclose the BACK domain.

Its subcellular location is the secreted. In Homo sapiens (Human), this protein is BTB/POZ domain-containing protein 17 (BTBD17).